A 321-amino-acid polypeptide reads, in one-letter code: Ribonuclease Z (321 aa).

H62, H64, D66, H67, H139, D210, and H268 together coordinate Zn(2+). The active-site Proton acceptor is the D66.

It belongs to the RNase Z family. In terms of assembly, homodimer. Zn(2+) is required as a cofactor.

The catalysed reaction is Endonucleolytic cleavage of RNA, removing extra 3' nucleotides from tRNA precursor, generating 3' termini of tRNAs. A 3'-hydroxy group is left at the tRNA terminus and a 5'-phosphoryl group is left at the trailer molecule.. Its function is as follows. Zinc phosphodiesterase, which displays some tRNA 3'-processing endonuclease activity. Probably involved in tRNA maturation, by removing a 3'-trailer from precursor tRNA. This chain is Ribonuclease Z, found in Trichodesmium erythraeum (strain IMS101).